The primary structure comprises 553 residues: Cytokine-like nuclear factor N-PAC (553 aa).

The region spanning 8-66 (LGDLVWGKLGRYPPWPGKIVNPPKDLKKPRGKKCFFVKFFGTEDHAWIKVEQLKPYHAH) is the PWWP domain. Composition is skewed to basic and acidic residues over residues 92–145 (RAKG…EGKK) and 162–182 (RAQE…KDLT). The segment at 92–188 (RAKGKDQTSS…KDLTIPESST (97 aa)) is disordered. Serine 130 carries the phosphoserine modification. Lysine 135 participates in a covalent cross-link: Glycyl lysine isopeptide (Lys-Gly) (interchain with G-Cter in SUMO2). Position 167 is a phosphoserine (serine 167). A DNA-binding region (a.T hook) is located at residues 168–180 (PRKRGRPPKDEKD). Residues lysine 176, lysine 179, lysine 201, and lysine 211 each participate in a glycyl lysine isopeptide (Lys-Gly) (interchain with G-Cter in SUMO2) cross-link. The interaction with histone H3 stretch occupies residues 214 to 217 (DPHF). Residues 216-225 (HFHHFLLSQT) are interaction with KDM1B. Glycyl lysine isopeptide (Lys-Gly) (interchain with G-Cter in SUMO2) cross-links involve residues lysine 227, lysine 237, lysine 240, and lysine 269. The interval 261 to 553 (GSITPTDKKI…MSAVYRAYIH (293 aa)) is dehydrogenase domain. 271–285 (GFLGLGLMGSGIVSN) contributes to the NAD(+) binding site. Residue lysine 302 forms a Glycyl lysine isopeptide (Lys-Gly) (interchain with G-Cter in SUMO2) linkage. NAD(+)-binding residues include threonine 362 and lysine 505. Serine 540 is modified (phosphoserine).

It belongs to the HIBADH-related family. NP60 subfamily. Homotetramere. Interacts with MAPK14. Interacts with KDM1B at nucleosomes; this interaction stimulates H3K4me1 and H3K4me2 demethylation. Binds to mononucleosomes. Interacts with GATA4; the interaction is required for a synergistic activation of GATA4 target genes transcription.

It localises to the nucleus. The protein resides in the chromosome. In terms of biological role, cytokine-like nuclear factor with chromatin gene reader activity involved in chromatin modification and regulation of gene expression. Acts as a nucleosome-destabilizing factor that is recruited to genes during transcriptional activation. Recognizes and binds histone H3 without a preference for specific epigenetic markers and also binds DNA. Interacts with KDM1B and promotes its histone demethylase activity by facilitating the capture of H3 tails, they form a multifunctional enzyme complex that modifies transcribed chromatin and facilitates Pol II transcription through nucleosomes. Stimulates the acetylation of 'Lys-56' of nucleosomal histone H3 (H3K56ac) by EP300. With GATA4, co-binds a defined set of heart development genes and coregulates their expression during cardiomyocyte differentiation. Regulates p38 MAP kinase activity by mediating stress activation of MAPK14/p38alpha and specifically regulating MAPK14 signaling. Indirectly promotes phosphorylation of MAPK14 and activation of ATF2. The phosphorylation of MAPK14 requires upstream activity of MAP2K4 and MAP2K6. In Homo sapiens (Human), this protein is Cytokine-like nuclear factor N-PAC.